The chain runs to 127 residues: MFRTMLGGKIHRATVTEADLNYVGSITVDQDLLDAAGIYPNEKVAIVNNNNGERFETYTISGKRGSGVVCLNGAAARLVQKGDIVIIMSYVQLSEPEIAAHEPKVVLVDGNNKIRDIISYEPPHTVL.

Residue Ser25 is the Schiff-base intermediate with substrate; via pyruvic acid of the active site. The residue at position 25 (Ser25) is a Pyruvic acid (Ser). Substrate is bound at residue Thr57. The active-site Proton donor is Tyr58. 73–75 (GAA) is a substrate binding site.

This sequence belongs to the PanD family. As to quaternary structure, heterooctamer of four alpha and four beta subunits. It depends on pyruvate as a cofactor. Is synthesized initially as an inactive proenzyme, which is activated by self-cleavage at a specific serine bond to produce a beta-subunit with a hydroxyl group at its C-terminus and an alpha-subunit with a pyruvoyl group at its N-terminus.

The protein localises to the cytoplasm. It carries out the reaction L-aspartate + H(+) = beta-alanine + CO2. Its pathway is cofactor biosynthesis; (R)-pantothenate biosynthesis; beta-alanine from L-aspartate: step 1/1. In terms of biological role, catalyzes the pyruvoyl-dependent decarboxylation of aspartate to produce beta-alanine. The protein is Aspartate 1-decarboxylase of Neisseria meningitidis serogroup C / serotype 2a (strain ATCC 700532 / DSM 15464 / FAM18).